Here is a 430-residue protein sequence, read N- to C-terminus: Adenylosuccinate synthetase (430 aa).

Residues 12–18 (GDEGKGK) and 40–42 (GHT) contribute to the GTP site. Residue D13 is the Proton acceptor of the active site. Positions 13 and 40 each coordinate Mg(2+). IMP contacts are provided by residues 13–16 (DEGK), 38–41 (NAGH), T130, R144, Q224, T239, and R303. H41 functions as the Proton donor in the catalytic mechanism. Residue 299-305 (TVTGRKR) coordinates substrate. GTP is bound by residues R305, 331-333 (KLD), and 413-415 (STS).

It belongs to the adenylosuccinate synthetase family. Homodimer. The cofactor is Mg(2+).

Its subcellular location is the cytoplasm. The catalysed reaction is IMP + L-aspartate + GTP = N(6)-(1,2-dicarboxyethyl)-AMP + GDP + phosphate + 2 H(+). Its pathway is purine metabolism; AMP biosynthesis via de novo pathway; AMP from IMP: step 1/2. Functionally, plays an important role in the de novo pathway of purine nucleotide biosynthesis. Catalyzes the first committed step in the biosynthesis of AMP from IMP. The sequence is that of Adenylosuccinate synthetase from Cereibacter sphaeroides (strain ATCC 17025 / ATH 2.4.3) (Rhodobacter sphaeroides).